A 558-amino-acid chain; its full sequence is Factor VII-activating protease (558 aa).

The signal sequence occupies residues M1–G23. EGF-like domains lie at D71 to Q107, V109 to S146, and V148 to E186. 18 disulfide bridges follow: C75–C86, C80–C95, C97–C106, C113–C123, C118–C134, C136–C145, C152–C163, C157–C174, C176–C185, C192–C274, C213–C255, C244–C269, C299–C433, C345–C361, C353–C422, C445–C513, C475–C491, and C503–C531. The Kringle domain maps to D191–C274. Residues I312–H553 enclose the Peptidase S1 domain. Residues H360 and D409 each act as charge relay system in the active site. The Charge relay system role is filled by S507.

The protein belongs to the peptidase S1 family. In terms of assembly, heterodimer; disulfide-linked. Heterodimer of a 50 kDa heavy and a 27 kDa light chain linked by a disulfide bond. Proteolytic cleavage at Gly-23 or Met-27 can give rise to the 50 kDa heavy chain (HC) and cleavage at Arg-311 or Lys-317 can give rise to the 27 kDa light chain (LC). The HC can undergo further proteolytic cleavage giving rise to a 26 kDa fragment. The LC can undergo further proteolytic cleavage at Arg-311 leading to a 17-kDa fragment and at Arg-478 leading to a 8-kDa fragment.

The protein resides in the secreted. Functionally, cleaves the alpha-chain at multiple sites and the beta-chain between 'Lys-53' and 'Lys-54' but not the gamma-chain of fibrinogen and therefore does not initiate the formation of the fibrin clot and does not cause the fibrinolysis directly. It does not cleave (activate) prothrombin and plasminogen but converts the inactive single chain urinary plasminogen activator (pro-urokinase) to the active two chain form. Activates coagulation factor VII. May function as a tumor suppressor negatively regulating cell proliferation and cell migration. This chain is Factor VII-activating protease, found in Rattus norvegicus (Rat).